We begin with the raw amino-acid sequence, 141 residues long: Large ribosomal subunit protein uL11 (141 aa).

The protein belongs to the universal ribosomal protein uL11 family. As to quaternary structure, part of the ribosomal stalk of the 50S ribosomal subunit. Interacts with L10 and the large rRNA to form the base of the stalk. L10 forms an elongated spine to which L12 dimers bind in a sequential fashion forming a multimeric L10(L12)X complex. Post-translationally, one or more lysine residues are methylated.

In terms of biological role, forms part of the ribosomal stalk which helps the ribosome interact with GTP-bound translation factors. The chain is Large ribosomal subunit protein uL11 from Lactiplantibacillus plantarum (strain ATCC BAA-793 / NCIMB 8826 / WCFS1) (Lactobacillus plantarum).